Here is a 91-residue protein sequence, read N- to C-terminus: Potassium channel toxin MeuTXK-beta-1 (91 aa).

The signal sequence occupies residues 1 to 19 (MQRNLVVLLFLGMVALSSC). Residues 54–91 (QFGCPAYQGYCDDHCQDIEKKEGFCHGFKCKCGIPMGF) form the BetaSPN-type CS-alpha/beta domain. 3 disulfide bridges follow: Cys-57–Cys-78, Cys-64–Cys-83, and Cys-68–Cys-85.

Expressed by the venom gland.

The protein localises to the secreted. Functionally, has a low affinity binding to potassium channels of rat brain synaptosomes. Displays weak antibacterial activity against Stenotrophomonas sp. Strongly inhibits the development of the Plasmodium berghei ookinetes. Displays slight hemolytic effect on mouse erythrocytes. Induces cytolysis on Xenopus oocytes at high concentrations. Is not toxic towards mice and towards the insect Tenebrio molitor. This chain is Potassium channel toxin MeuTXK-beta-1, found in Mesobuthus eupeus (Lesser Asian scorpion).